A 177-amino-acid chain; its full sequence is Large ribosomal subunit protein uL6 (177 aa).

It belongs to the universal ribosomal protein uL6 family. As to quaternary structure, part of the 50S ribosomal subunit.

In terms of biological role, this protein binds to the 23S rRNA, and is important in its secondary structure. It is located near the subunit interface in the base of the L7/L12 stalk, and near the tRNA binding site of the peptidyltransferase center. The chain is Large ribosomal subunit protein uL6 from Roseobacter denitrificans (strain ATCC 33942 / OCh 114) (Erythrobacter sp. (strain OCh 114)).